The chain runs to 205 residues: Protein TON_1965 (205 aa).

The AMMECR1 domain maps to 7–201 (EWGEFLVRLA…EEYPKGPVKR (195 aa)).

In Thermococcus onnurineus (strain NA1), this protein is Protein TON_1965.